A 309-amino-acid chain; its full sequence is Taste receptor type 2 member 46 (309 aa).

Met-1 is a topological domain (extracellular). The helical transmembrane segment at 2–22 threads the bilayer; that stretch reads ITFLPIIFSILIVVTFVIGNF. Residues 23–46 are Cytoplasmic-facing; the sequence is ANGFIALANSIEWFKRQKISFADQ. Residues 47–67 form a helical membrane-spanning segment; it reads ILTALAVSRVGLLWVLLLNWY. Residues 68–86 lie on the Extracellular side of the membrane; that stretch reads ATELNPAFYSIEVRITAYN. A helical transmembrane segment spans residues 87 to 107; that stretch reads LWAVINHFSNWLATSLSIFYL. At 108–126 the chain is on the cytoplasmic side; the sequence is LKIANFSNLIFLRLKRRVK. Residues 127-147 form a helical membrane-spanning segment; sequence SVVLVILLGPLLFLVCHLFVI. Residues 148–178 lie on the Extracellular side of the membrane; it reads NMNQIIWTKEYEGNMTWKIKLRSAMYLSNIT. N-linked (GlcNAc...) asparagine glycans are attached at residues Asn-161 and Asn-176. A helical transmembrane segment spans residues 179-199; sequence VTILANLVPFTLTLISFLLLI. The Cytoplasmic portion of the chain corresponds to 200–229; it reads CSLCKHLKKMQLHGKGSQDPSMKVHIKALQ. The chain crosses the membrane as a helical span at residues 230-250; the sequence is TVTSFLLLCAIYFLSIIMSVW. Residues 251–259 are Extracellular-facing; it reads SFESLENKP. The chain crosses the membrane as a helical span at residues 260-280; it reads VFMFCEAITFSYPSTHPFILI. Residues 281–309 lie on the Cytoplasmic side of the membrane; sequence WGNKKLKQTFLSVLWHVRYWVKGEEPSSP.

Belongs to the G-protein coupled receptor T2R family.

It localises to the membrane. The protein localises to the cell projection. The protein resides in the cilium membrane. In terms of biological role, receptor that may play a role in the perception of bitterness and is gustducin-linked. May play a role in sensing the chemical composition of the gastrointestinal content. The activity of this receptor may stimulate alpha gustducin, mediate PLC-beta-2 activation and lead to the gating of TRPM5. In airway epithelial cells, binding of bitter compounds increases the intracellular calcium ion concentration and stimulates ciliary beat frequency. This chain is Taste receptor type 2 member 46 (TAS2R46), found in Pan paniscus (Pygmy chimpanzee).